Here is a 435-residue protein sequence, read N- to C-terminus: Tol-Pal system protein TolB (435 aa).

Positions 1-20 (MRKIIAGVFIFVFLISNLYA) are cleaved as a signal peptide.

This sequence belongs to the TolB family. In terms of assembly, the Tol-Pal system is composed of five core proteins: the inner membrane proteins TolA, TolQ and TolR, the periplasmic protein TolB and the outer membrane protein Pal. They form a network linking the inner and outer membranes and the peptidoglycan layer.

Its subcellular location is the periplasm. Part of the Tol-Pal system, which plays a role in outer membrane invagination during cell division and is important for maintaining outer membrane integrity. This chain is Tol-Pal system protein TolB, found in Francisella tularensis subsp. holarctica (strain LVS).